We begin with the raw amino-acid sequence, 558 residues long: Membrane transporter D2 (558 aa).

Positions 1–28 (MTLKKRSSAPELPTSLDEDEEEDSPQPL) are disordered. At 1–38 (MTLKKRSSAPELPTSLDEDEEEDSPQPLSNTPFFSMKN) the chain is on the cytoplasmic side. A helical transmembrane segment spans residues 39–59 (LIVATPIILTPLLYGYNLGFV). Residues 60 to 152 (GPYSTMYGYA…QVGYSSIQSG (93 aa)) lie on the Extracellular side of the membrane. Residues 153 to 173 (VFAGSLVIGSTMGALMGGYLT) form a helical membrane-spanning segment. The Cytoplasmic segment spans residues 174 to 179 (KRLDYC). The chain crosses the membrane as a helical span at residues 180–200 (KSFLFIGLLSVIGNVLTHVAT). Residues 201–204 (GLFH) lie on the Extracellular side of the membrane. Residues 205 to 225 (YWVLFVARIVLGFPLGWQSIT) form a helical membrane-spanning segment. Residues 226-241 (SSHYTDKFAPANHAKT) are Cytoplasmic-facing. The chain crosses the membrane as a helical span at residues 242 to 262 (LGTLFQVSVSTGIFVTSFFGL). The Extracellular segment spans residues 263–281 (VLGNTIQYDAASNANTMGR). A helical membrane pass occupies residues 282–302 (MQGLVSVSTLLSIFVVFLPLI). The Cytoplasmic segment spans residues 303–335 (TKDGYSKSRRGDYEGENSEDASRKAAEEYTMTQ). The chain crosses the membrane as a helical span at residues 336-356 (MIGPILNGVAMGCVTQLTGIN). Residues 357–373 (ANMNFAPTIMSNLGLQP) lie on the Extracellular side of the membrane. A helical membrane pass occupies residues 374 to 394 (LVGNIIVMAWNMLATFCVIPL). Topologically, residues 395 to 402 (SRRFSMRT) are cytoplasmic. Residues 403-423 (LFLFCGFVGSLCCVFLGGIPV) traverse the membrane as a helical segment. Residues 424-441 (YPGVTKSDKAISGIAITG) are Extracellular-facing. Residues 442–463 (IAIFIALYEMGVGPCFYVLAVD) form a helical membrane-spanning segment. The Cytoplasmic segment spans residues 464–478 (VFPESFRPIGSSITV). Residues 479 to 499 (GVMFIFNLIINICYPIATEGI) traverse the membrane as a helical segment. Residues 500–512 (SGGPSGNPNKGQA) are Extracellular-facing. Residues 513-533 (VAFIFFGCIGVVACVIEYFFL) traverse the membrane as a helical segment. At 534-558 (QPWVEPEAKMTDDLDGAAVPEGKHD) the chain is on the cytoplasmic side.

The protein belongs to the major facilitator superfamily. Sugar transporter (TC 2.A.1.1) family.

It localises to the membrane. In Leishmania donovani, this protein is Membrane transporter D2.